The chain runs to 806 residues: Glycerol-3-phosphate acyltransferase (806 aa).

Positions 305–310 match the HXXXXD motif motif; it reads CHRSHM.

This sequence belongs to the GPAT/DAPAT family.

It localises to the cell inner membrane. It carries out the reaction sn-glycerol 3-phosphate + an acyl-CoA = a 1-acyl-sn-glycero-3-phosphate + CoA. The protein operates within phospholipid metabolism; CDP-diacylglycerol biosynthesis; CDP-diacylglycerol from sn-glycerol 3-phosphate: step 1/3. This chain is Glycerol-3-phosphate acyltransferase, found in Salmonella agona (strain SL483).